Consider the following 341-residue polypeptide: Phosphoribosylformylglycinamidine cyclo-ligase (341 aa).

Belongs to the AIR synthase family.

It localises to the cytoplasm. It carries out the reaction 2-formamido-N(1)-(5-O-phospho-beta-D-ribosyl)acetamidine + ATP = 5-amino-1-(5-phospho-beta-D-ribosyl)imidazole + ADP + phosphate + H(+). It functions in the pathway purine metabolism; IMP biosynthesis via de novo pathway; 5-amino-1-(5-phospho-D-ribosyl)imidazole from N(2)-formyl-N(1)-(5-phospho-D-ribosyl)glycinamide: step 2/2. In Synechocystis sp. (strain ATCC 27184 / PCC 6803 / Kazusa), this protein is Phosphoribosylformylglycinamidine cyclo-ligase.